The chain runs to 611 residues: MMLGPKTVTRGATKGAAPRSMAARRVGGARRLSVRAAAGPAGSEKFDYVLVGGGTASCVLANKLSADGNKKVLVLEAGPTGDAMEVAVPAGITRLFAHPVMDWGMSSLTQKQLVAREIYLARGRMLGGSSGSNATLYHRGSAADYDAWGLEGWSSKDVLDWFVKAECYADGPKPYHGTGGSMNTEQPRYENVLHDEFFKAAAATGLPANPDFNDWSHPQDGFGEFQVSQKKGQRADTYRTYLKPAMARGNLKVVIGARATKVNIEKGSSGARTTGVEYAMQQFGDRFTAELAPGGEVLMCSGAVHTPHLLMLSGVGPAATLKEHGIDVVSDLSGVGQNLQDHPAAVLAARAKPEFEKLSVTSEVYDDKCNIKLGAVAQYLFQRRGPLATTGCDHGAFVRTSSSLSQPDLQMRFVPGCALDPDGVKSYIVFGELKKQGRAWPGGITLQLLAIRAKSKGSIGLKAADPFINPAININYFSDPADLATLVNAVKMARKIAAQEPLKKYLQEETFPGERASSDKDLEEYIRRTVHSGNALVGTAAMGASPAAGAVVSSADLKVFGVEGLRVVDASVLPRIPGGQTGAATVMVAERAAALLRGQATIAPSRQPVAV.

Residues 1–22 form a disordered region; sequence MMLGPKTVTRGATKGAAPRSMA. The transit peptide at 1–36 directs the protein to the chloroplast; that stretch reads MMLGPKTVTRGATKGAAPRSMAARRVGGARRLSVRA. FAD-binding positions include 55-56, Glu76, Met125, Ser129, and 133-136; these read TA and NATL. Hexadecanoate-binding residues include Cys392, Arg412, Tyr427, and Gln447. Residue Gly582 participates in FAD binding.

It belongs to the GMC oxidoreductase family. FAD is required as a cofactor.

It localises to the plastid. The protein resides in the chloroplast. The catalysed reaction is a long-chain fatty acid + hnu + H(+) = a long-chain alkane + CO2. The enzyme catalyses hnu + hexadecanoate + H(+) = pentadecane + CO2. Activated by blue light and repressed by red light. Functionally, catalyzes the decarboxylation of free fatty acids to n-alkanes or n-alkenes in response to blue light. Substrate preference is toward fatty acids with C17 or C18 chains. Saturated fatty acids are converted to alkanes, not alkenes. The decarboxylation is initiated through electron abstraction from the fatty acid by the photo-excited FAD. The chain is Fatty acid photodecarboxylase, chloroplastic from Chlamydomonas reinhardtii (Chlamydomonas smithii).